The following is a 366-amino-acid chain: Flagellar P-ring protein (366 aa).

The first 22 residues, 1–22 (MFTRKSVILMAVLLIWSAVSYA), serve as a signal peptide directing secretion.

The protein belongs to the FlgI family. As to quaternary structure, the basal body constitutes a major portion of the flagellar organelle and consists of four rings (L,P,S, and M) mounted on a central rod.

It is found in the periplasm. Its subcellular location is the bacterial flagellum basal body. Its function is as follows. Assembles around the rod to form the L-ring and probably protects the motor/basal body from shearing forces during rotation. The sequence is that of Flagellar P-ring protein from Hydrogenovibrio crunogenus (strain DSM 25203 / XCL-2) (Thiomicrospira crunogena).